The following is a 320-amino-acid chain: Ferrochelatase (320 aa).

Fe cation-binding residues include His194 and Glu275.

Belongs to the ferrochelatase family.

It localises to the cytoplasm. It catalyses the reaction heme b + 2 H(+) = protoporphyrin IX + Fe(2+). Its pathway is porphyrin-containing compound metabolism; protoheme biosynthesis; protoheme from protoporphyrin-IX: step 1/1. Functionally, catalyzes the ferrous insertion into protoporphyrin IX. This chain is Ferrochelatase, found in Vibrio cholerae serotype O1 (strain ATCC 39315 / El Tor Inaba N16961).